We begin with the raw amino-acid sequence, 174 residues long: Urease accessory protein UreE (174 aa).

The segment at 146-174 (NGAYATGGHAHDHDGEPEHVHGPGCQHAH) is disordered. A compositionally biased stretch (basic and acidic residues) spans 154 to 166 (HAHDHDGEPEHVH).

This sequence belongs to the UreE family.

The protein resides in the cytoplasm. In terms of biological role, involved in urease metallocenter assembly. Binds nickel. Probably functions as a nickel donor during metallocenter assembly. In Albidiferax ferrireducens (strain ATCC BAA-621 / DSM 15236 / T118) (Rhodoferax ferrireducens), this protein is Urease accessory protein UreE.